The primary structure comprises 284 residues: Tropomyosin (284 aa).

A coiled-coil region spans residues 1-284 (MDAIKKKMLA…DQTFAELAGY (284 aa)). Polar residues predominate over residues 202-213 (NNTKSLEISEQE). Residues 202-223 (NNTKSLEISEQEASQREDSYEE) are disordered. A compositionally biased stretch (basic and acidic residues) spans 214–223 (ASQREDSYEE).

It belongs to the tropomyosin family. As to quaternary structure, homodimer.

Functionally, tropomyosin, in association with the troponin complex, plays a central role in the calcium dependent regulation of muscle contraction. The protein is Tropomyosin of Haliotis rufescens (California red abalone).